The sequence spans 391 residues: Apolipoprotein A-IV (391 aa).

Residues 1 to 20 (MFLKAVVLTVALVAITGTQA) form the signal peptide. Repeat copies occupy residues 33–54 (DYFT…KTDV), 60–81 (TLFQ…NKLV), 82–103 (PFAV…EEIQ), 115–136 (PHAN…EHLR), 137–158 (PYAT…RQLT), 159–180 (PYIQ…SSMV), 181–202 (PFAN…GQLT), 203–224 (PRAN…SRLA), 225–246 (PLAE…FQMK), 247–268 (KNAE…KNLA), 269–286 (PLVE…EGLQ), 287–308 (KSLE…RAVE), and 309–330 (PLGD…QQLG). The segment at 33–330 (DYFTQLSNNA…QMEKFRQQLG (298 aa)) is 13 X 22 AA approximate tandem repeats. A Phosphoserine modification is found at S333. The segment at 354–391 (FMSTLQKKGSPDQPLALPLPEQVQEQVQEQVQPKPLES) is disordered. Positions 371-391 (PLPEQVQEQVQEQVQPKPLES) are enriched in low complexity.

It belongs to the apolipoprotein A1/A4/E family. In terms of assembly, homodimer. In terms of tissue distribution, secreted in plasma.

The protein resides in the secreted. May have a role in chylomicrons and VLDL secretion and catabolism. Required for efficient activation of lipoprotein lipase by ApoC-II; potent activator of LCAT. Apoa-IV is a major component of HDL and chylomicrons. This Rattus norvegicus (Rat) protein is Apolipoprotein A-IV (Apoa4).